The following is a 59-amino-acid chain: Phycobilisome degradation protein NblA (59 aa).

The protein to chloroplast ycf18.

Involved in phycobilisome (PBS) degradation during nutrient deprivation. May mark the PBS for degradation by covalent association with PBS components or may disrupt the PBS via ionic interactions. This Synechococcus elongatus (strain ATCC 33912 / PCC 7942 / FACHB-805) (Anacystis nidulans R2) protein is Phycobilisome degradation protein NblA.